The primary structure comprises 229 residues: Large ribosomal subunit protein uL1 (229 aa).

This sequence belongs to the universal ribosomal protein uL1 family. In terms of assembly, part of the 50S ribosomal subunit.

Binds directly to 23S rRNA. The L1 stalk is quite mobile in the ribosome, and is involved in E site tRNA release. Functionally, protein L1 is also a translational repressor protein, it controls the translation of the L11 operon by binding to its mRNA. This Streptococcus pneumoniae serotype 2 (strain D39 / NCTC 7466) protein is Large ribosomal subunit protein uL1.